The chain runs to 537 residues: Atrial natriuretic peptide receptor 3 (537 aa).

Positions M1 to L20 are cleaved as a signal peptide. Positions A21–R41 are excised as a propeptide. Residues E42 to E477 lie on the Extracellular side of the membrane. An N-linked (GlcNAc...) asparagine glycan is attached at N82. 2 disulfide bridges follow: C104–C132 and C209–C257. N-linked (GlcNAc...) asparagine glycosylation is found at N289 and N390. Residues S478–F500 traverse the membrane as a helical segment. Residues R501 to A537 are Cytoplasmic-facing.

It belongs to the ANF receptor family. In terms of assembly, homodimer; disulfide-linked. Interacts with OSTN.

It localises to the cell membrane. In terms of biological role, receptor for the natriuretic peptide hormones, binding with similar affinities atrial natriuretic peptide NPPA/ANP, brain natriuretic peptide NPPB/BNP, and C-type natriuretic peptide NPPC/CNP. May function as a clearance receptor for NPPA, NPPB and NPPC, regulating their local concentrations and effects. Acts as a regulator of osteoblast differentiation and bone growth by binding to its ligand osteocrin, thereby preventing binding between NPR3/NPR-C and natriuretic peptides, leading to increase cGMP production. In Bos taurus (Bovine), this protein is Atrial natriuretic peptide receptor 3 (NPR3).